The primary structure comprises 376 residues: Phosphoserine aminotransferase (376 aa).

Arginine 54 provides a ligand contact to L-glutamate. Pyridoxal 5'-phosphate contacts are provided by residues 88-89 (AT), tryptophan 115, threonine 165, aspartate 186, and glutamine 209. Lysine 210 bears the N6-(pyridoxal phosphate)lysine mark. 251–252 (NT) contributes to the pyridoxal 5'-phosphate binding site.

The protein belongs to the class-V pyridoxal-phosphate-dependent aminotransferase family. SerC subfamily. As to quaternary structure, homodimer. Pyridoxal 5'-phosphate is required as a cofactor.

It localises to the cytoplasm. It catalyses the reaction O-phospho-L-serine + 2-oxoglutarate = 3-phosphooxypyruvate + L-glutamate. It carries out the reaction 4-(phosphooxy)-L-threonine + 2-oxoglutarate = (R)-3-hydroxy-2-oxo-4-phosphooxybutanoate + L-glutamate. Its pathway is amino-acid biosynthesis; L-serine biosynthesis; L-serine from 3-phospho-D-glycerate: step 2/3. It functions in the pathway cofactor biosynthesis; pyridoxine 5'-phosphate biosynthesis; pyridoxine 5'-phosphate from D-erythrose 4-phosphate: step 3/5. Its function is as follows. Catalyzes the reversible conversion of 3-phosphohydroxypyruvate to phosphoserine and of 3-hydroxy-2-oxo-4-phosphonooxybutanoate to phosphohydroxythreonine. The polypeptide is Phosphoserine aminotransferase (Rhodopirellula baltica (strain DSM 10527 / NCIMB 13988 / SH1)).